The chain runs to 236 residues: Ribosomal RNA small subunit methyltransferase G (236 aa).

Residues G80, 131–132 (AE), and R148 each bind S-adenosyl-L-methionine.

It belongs to the methyltransferase superfamily. RNA methyltransferase RsmG family.

The protein resides in the cytoplasm. Specifically methylates the N7 position of a guanine in 16S rRNA. In Ureaplasma parvum serovar 3 (strain ATCC 27815 / 27 / NCTC 11736), this protein is Ribosomal RNA small subunit methyltransferase G.